Here is a 348-residue protein sequence, read N- to C-terminus: N6-Methyl-AMP deaminase (348 aa).

The Zn(2+) site is built by His18 and His20. N(6)-methyl-AMP contacts are provided by residues His20, Asn22, His68, 100–103 (STPR), Asp142, and Gly175. Residue His202 coordinates Zn(2+). Positions 205, 287, and 288 each coordinate N(6)-methyl-AMP. The active-site Proton donor is Glu205. Asp287 is a binding site for Zn(2+).

The protein belongs to the metallo-dependent hydrolases superfamily. Adenosine and AMP deaminases family. In terms of assembly, monomer. It depends on Zn(2+) as a cofactor.

The catalysed reaction is N(6)-methyl-AMP + H2O + H(+) = IMP + methylamine. In terms of biological role, catalyzes the hydrolysis of the free cytosolic methylated adenosine nucleotide N(6)-methyl-AMP (N6-mAMP) to produce inositol monophosphate (IMP) and methylamine. Is required for the catabolism of cytosolic N6-mAMP, which is derived from the degradation of mRNA containing N6-methylated adenine (m6A). The polypeptide is N6-Methyl-AMP deaminase (mapda) (Danio rerio (Zebrafish)).